We begin with the raw amino-acid sequence, 278 residues long: Pantothenate synthetase (278 aa).

Position 26-33 (26-33 (MGNLHEGH)) interacts with ATP. His33 functions as the Proton donor in the catalytic mechanism. Gln57 contacts (R)-pantoate. Gln57 provides a ligand contact to beta-alanine. An ATP-binding site is contributed by 144 to 147 (GKKD). A (R)-pantoate-binding site is contributed by Gln150. ATP is bound by residues Gly173 and 181–184 (LSSR).

The protein belongs to the pantothenate synthetase family. Homodimer.

It is found in the cytoplasm. The enzyme catalyses (R)-pantoate + beta-alanine + ATP = (R)-pantothenate + AMP + diphosphate + H(+). It participates in cofactor biosynthesis; (R)-pantothenate biosynthesis; (R)-pantothenate from (R)-pantoate and beta-alanine: step 1/1. Its function is as follows. Catalyzes the condensation of pantoate with beta-alanine in an ATP-dependent reaction via a pantoyl-adenylate intermediate. This Neisseria meningitidis serogroup B (strain ATCC BAA-335 / MC58) protein is Pantothenate synthetase.